The following is a 724-amino-acid chain: Eukaryotic elongation factor 2 kinase (724 aa).

Ala2 carries the N-acetylalanine modification. Phosphoserine is present on Ser27. Ser61 carries the phosphoserine; by autocatalysis modification. A phosphoserine mark is found at Ser70, Ser73, and Ser77. Residues 80 to 93 (FKEAWKHAIEKAKH) are calmodulin-binding. The Alpha-type protein kinase domain maps to 115 to 325 (RYNAVTGEWL…ICQSMGLTPF (211 aa)). A Phosphoserine modification is found at Ser242. 295-301 (GDGNLGV) contributes to the ATP binding site. Residues Thr347 and Thr352 each carry the phosphothreonine; by autocatalysis modification. Residues 353 to 476 (EEKCGSPRIR…HESDEDSLGS (124 aa)) form a disordered region. Ser358 is modified (phosphoserine; by MAPK13 and CDK1). Residues 358–376 (SPRIRTLSSSRPPLLLRLS) show a composition bias toward low complexity. At Ser365 the chain carries Phosphoserine; by autocatalysis, RPS6KA1 and RPS6KB1. Polar residues predominate over residues 385-403 (SDVTFDSLPSSPSSATPHS). Residue Ser391 is modified to Phosphoserine. Ser397 carries the post-translational modification Phosphoserine; by AMPK. Composition is skewed to basic and acidic residues over residues 421-435 (GPRD…RDSE) and 444-469 (SEKR…RHES). Phosphoserine occurs at positions 434, 444, and 469. Position 473 is a phosphoserine; by autocatalysis (Ser473). Ser476 carries the phosphoserine modification. At Ser499 the chain carries Phosphoserine; by PKA.

This sequence belongs to the protein kinase superfamily. Alpha-type protein kinase family. Monomer or homodimer. Interacts with Calmodulin/CALM1; this interaction is strictly required for phosphorylation activity. Post-translationally, autophosphorylated at multiple residues, Thr-347 being the major site. Phosphorylated by AMP-activated protein kinase AMPK at Ser-397 leading to EEF2K activation and protein synthesis inhibition. Phosphorylated by TRPM7 at Ser-77 resulting in improved protein stability, higher EE2F phosphorylated and subsequently reduced rate of protein synthesis. Phosphorylation by other kinases such as CDK1 and MAPK13 at Ser-358 or RPS6KA1 and RPS6KB1 at Ser-365 instead decrease EEF2K activity and promote protein synthesis. As to expression, ubiquitously expressed. Particularly abundant in skeletal muscle and heart.

The enzyme catalyses [translation elongation factor 2] + ATP = [translation elongation factor 2]-phosphate + ADP + H(+). Its activity is regulated as follows. Undergoes calcium/calmodulin-dependent intramolecular autophosphorylation, and this results in it becoming partially calcium/calmodulin-independent. Its function is as follows. Threonine kinase that regulates protein synthesis by controlling the rate of peptide chain elongation. Upon activation by a variety of upstream kinases including AMPK or TRPM7, phosphorylates the elongation factor EEF2 at a single site, renders it unable to bind ribosomes and thus inactive. In turn, the rate of protein synthesis is reduced. The polypeptide is Eukaryotic elongation factor 2 kinase (Eef2k) (Mus musculus (Mouse)).